We begin with the raw amino-acid sequence, 323 residues long: Phosphatidylglycerol--prolipoprotein diacylglyceryl transferase (323 aa).

A run of 3 helical transmembrane segments spans residues valine 15–serine 35, phenylalanine 58–tyrosine 78, and glycine 106–threonine 126. A 1,2-diacyl-sn-glycero-3-phospho-(1'-sn-glycerol) is bound at residue arginine 156. 2 consecutive transmembrane segments (helical) span residues glycine 242–leucine 262 and isoleucine 289–valine 309.

Belongs to the Lgt family.

It is found in the cell inner membrane. The enzyme catalyses L-cysteinyl-[prolipoprotein] + a 1,2-diacyl-sn-glycero-3-phospho-(1'-sn-glycerol) = an S-1,2-diacyl-sn-glyceryl-L-cysteinyl-[prolipoprotein] + sn-glycerol 1-phosphate + H(+). It functions in the pathway protein modification; lipoprotein biosynthesis (diacylglyceryl transfer). In terms of biological role, catalyzes the transfer of the diacylglyceryl group from phosphatidylglycerol to the sulfhydryl group of the N-terminal cysteine of a prolipoprotein, the first step in the formation of mature lipoproteins. In Borreliella afzelii (strain PKo) (Borrelia afzelii), this protein is Phosphatidylglycerol--prolipoprotein diacylglyceryl transferase.